The following is a 261-amino-acid chain: Homeobox-leucine zipper protein HOX24 (261 aa).

2 disordered regions span residues 42–67 and 160–188; these read AAAA…RKRR and KLNE…NSVM. Positions 46–61 are enriched in gly residues; it reads GRGGGDGDGGGGGGGG. Positions 61-121 form a DNA-binding region, homeobox; sequence GGERKRRFTE…NKRARWRSKQ (61 aa). The segment at 120-164 is leucine-zipper; sequence KQIEHDYAALRAQYDALHARVESLRQEKLALADQVDELRGKLNER.

The protein belongs to the HD-ZIP homeobox family. Class I subfamily. As to expression, expressed in roots and panicles.

Its subcellular location is the nucleus. Its function is as follows. Probable transcription factor. The protein is Homeobox-leucine zipper protein HOX24 (HOX24) of Oryza sativa subsp. japonica (Rice).